Consider the following 152-residue polypeptide: Superoxide dismutase [Cu-Zn] 4A (152 aa).

The Cu cation site is built by H45, H47, and H62. A disulfide bond links C56 and C145. Positions 62, 70, 79, and 82 each coordinate Zn(2+). H119 serves as a coordination point for Cu cation.

It belongs to the Cu-Zn superoxide dismutase family. In terms of assembly, homodimer. Cu cation is required as a cofactor. Requires Zn(2+) as cofactor.

The protein localises to the cytoplasm. The enzyme catalyses 2 superoxide + 2 H(+) = H2O2 + O2. Its function is as follows. Destroys radicals which are normally produced within the cells and which are toxic to biological systems. This Zea mays (Maize) protein is Superoxide dismutase [Cu-Zn] 4A (SODCC.3).